A 340-amino-acid chain; its full sequence is Phosphoribosylformylglycinamidine cyclo-ligase (340 aa).

This sequence belongs to the AIR synthase family.

It is found in the cytoplasm. It catalyses the reaction 2-formamido-N(1)-(5-O-phospho-beta-D-ribosyl)acetamidine + ATP = 5-amino-1-(5-phospho-beta-D-ribosyl)imidazole + ADP + phosphate + H(+). It participates in purine metabolism; IMP biosynthesis via de novo pathway; 5-amino-1-(5-phospho-D-ribosyl)imidazole from N(2)-formyl-N(1)-(5-phospho-D-ribosyl)glycinamide: step 2/2. This chain is Phosphoribosylformylglycinamidine cyclo-ligase, found in Streptococcus uberis (strain ATCC BAA-854 / 0140J).